Consider the following 1022-residue polypeptide: MSKDGNLDTSEFDPLANKEYTEEQKQTLEQEQKEFLSQTTTPALEADDGFIVTSASFAQSTPSMSALSGNISPDSQTSDPITKAVRETIIQPQKDNLIEQILKDLAALTDRDLAEQKRKEIEEEKEKDKTLSTFFGNPANREFIDKALENPELKKKLESIEIAGYKNVHNTFSAASGYPGGFKPVQWENHVSANDLRATVVKNDAGDELCTLNETTVKTKPFTLAKQDGTQVQISSYREIDFPIKLDKADGSMHLSMVALKADGTKPSKDKAVYFTAHYEEGPNGKPQLKEISSPKPLKFAGTGDDAIAYIEHGGEIYTLAVTRGKYKEMMKEVELNQGQSVDLSQAEDIIIGQGQSKEQPLITPQQTTSSSVEPPQYKQQVPPITPTNQPLQPETSQMPQSQQVNPNLLNTATALSGSMQDLLNYVNAGLTKAIDSNKQIDLIKEAATAILNNEKSDIAEKQANIIALAENTVNNKNLKPDAKVTGVNAVLETIKNDQNTPNLEKSKMLEATVAIVLNSENLEPKQKQQMLEKAVDVGLSLKDDASRAAAIDGIKDVVIKSNLSPEDKMLIAVGDKVNVSELSNAEKQKLLGSVLKKGVEAQVLSPAQQQLMQQHLYKIMAEQTKKDTIKKVNDILFDPLSNTELKTTNIQAITSNVLDGPATAEVKGEIIQAITNTIAGSSLEAQDKAAIIKGVGETIATHSDTSLSLPNKALIMASAEKGIAESQTNLPDRELMTKGLVDGIYEGKGGPEITKAVSSGIDNSNINDSEKEALKKAKDAASEAALDRDTQNLTEGFKGQNIEEHKPHDDIYNKAREVINAVNPVIEALEKSKEPVVSAEERIVQETSSILNNISKLAVEKVNNFRAMLSPNGNLKTLEEKKEEAIKKVDELVKAFGTKSSTEEQQSFIKTNLIDDKTLSKEVRLQTIDKLLQEQKRSEAIENPSVKTEDVRVVSGKSKLKPISKDNPDIEKAKMVVGRDRVNIKGNIKIMGALMNARDIIQSENLNKSTPIKRESSPPQR.

Disordered stretches follow at residues 1–41 and 355–403; these read MSKD…QTTT and GQSK…PQSQ. A compositionally biased stretch (basic and acidic residues) spans 19-34; it reads EYTEEQKQTLEQEQKE. Composition is skewed to polar residues over residues 355–380 and 387–403; these read GQSK…QYKQ and PTNQ…PQSQ.

It localises to the cytoplasm. The protein is Antigenic heat-stable 120 kDa protein (sca4) of Rickettsia conorii (strain ATCC VR-613 / Malish 7).